Here is a 1052-residue protein sequence, read N- to C-terminus: MSSAAEPPPPPPPESAPSKPAASIASGGSNSSNKGGPEGVAAQAVASAASAGPADAEMEEIFDDASPGKQKEIQEPDPTYEEKMQTDRANRFEYLLKQTELFAHFIQPAAQKTPTSPLKMKPGRPRIKKDEKQNLLSVGDYRHRRTEQEEDEELLTESSKATNVCTRFEDSPSYVKWGKLRDYQVRGLNWLISLYENGINGILADEMGLGKTLQTISLLGYMKHYRNIPGPHMVLVPKSTLHNWMSEFKRWVPTLRSVCLIGDKEQRAAFVRDVLLPGEWDVCVTSYEMLIKEKSVFKKFNWRYLVIDEAHRIKNEKSKLSEIVREFKTTNRLLLTGTPLQNNLHELWSLLNFLLPDVFNSADDFDSWFDTNNCLGDQKLVERLHMVLRPFLLRRIKADVEKSLPPKKEVKIYVGLSKMQREWYTRILMKDIDILNSAGKMDKMRLLNILMQLRKCCNHPYLFDGAEPGPPYTTDMHLVTNSGKMVVLDKLLPKLKEQGSRVLIFSQMTRVLDILEDYCMWRNYEYCRLDGQTPHDERQDSINAYNEPNSTKFVFMLSTRAGGLGINLATADVVILYDSDWNPQVDLQAMDRAHRIGQTKTVRVFRFITDNTVEERIVERAEMKLRLDSIVIQQGRLVDQNLNKIGKDEMLQMIRHGATHVFASKESEITDEDIDGILERGAKKTAEMNEKLSKMGESSLRNFTMDTESSVYNFEGEDYREKQKIAFTEWIEPPKRERKANYAVDAYFREALRVSEPKAPKAPRPPKQPNVQDFQFFPPRLFELLEKEILFYRKTIGYKVPRNPELPNAAQAQKEEQLKIDEAESLNDEELEEKEKLLTQGFTNWNKRDFNQFIKANEKWGRDDIENIAREVEGKTPEEVIEYSAVFWERCNELQDIEKIMAQIERGEARIQRRISIKKALDTKIGRYKAPFHQLRISYGTNKGKNYTEEEDRFLICMLHKLGFDKENVYDELRQCIRNSPQFRFDWFLKSRTAMELQRRCNTLITLIERENMELEEKEKAEKKKRGPKPSTQKRKMDGAPDGRGRKKKLKL.

Residues 1–15 (MSSAAEPPPPPPPES) show a composition bias toward pro residues. The segment at 1–83 (MSSAAEPPPP…QEPDPTYEEK (83 aa)) is disordered. Residue S2 is modified to N-acetylserine. Residues 16-55 (APSKPAASIASGGSNSSNKGGPEGVAAQAVASAASAGPAD) show a composition bias toward low complexity. S66 carries the phosphoserine modification. Residues 69–83 (KQKEIQEPDPTYEEK) show a composition bias toward basic and acidic residues. A Glycyl lysine isopeptide (Lys-Gly) (interchain with G-Cter in SUMO2) cross-link involves residue K83. T113 bears the Phosphothreonine mark. A phosphoserine mark is found at S116, S137, and S171. Residues 192 to 357 (ISLYENGING…WSLLNFLLPD (166 aa)) enclose the Helicase ATP-binding domain. 205 to 212 (DEMGLGKT) is a binding site for ATP. Residues 308-311 (DEAH) carry the DEAH box motif. Position 440 is an N6-acetyllysine (K440). The 152-residue stretch at 487–638 (VLDKLLPKLK…SIVIQQGRLV (152 aa)) folds into the Helicase C-terminal domain. Residues K644, K647, K694, K722, and K735 each participate in a glycyl lysine isopeptide (Lys-Gly) (interchain with G-Cter in SUMO2) cross-link. Residues S755 and S825 each carry the phosphoserine modification. SANT domains lie at 840-892 (QGFT…ERCN) and 943-1007 (KGKN…LITL). A Glycyl lysine isopeptide (Lys-Gly) (interchain with G-Cter in SUMO2) cross-link involves residue K966. The interval 1015-1052 (LEEKEKAEKKKRGPKPSTQKRKMDGAPDGRGRKKKLKL) is disordered. The segment covering 1023–1034 (KKKRGPKPSTQK) has biased composition (basic residues). Residues 1035–1044 (RKMDGAPDGR) show a composition bias toward basic and acidic residues.

This sequence belongs to the SNF2/RAD54 helicase family. ISWI subfamily. In terms of assembly, component of the ACF-5 ISWI chromatin-remodeling complex (also called the ACF/WCRF complex) at least composed of SMARCA5/SNF2H and BAZ1A/ACF1, which regulates the spacing of histone octamers on the DNA template to facilitate access to DNA. Within the complex interacts with BAZ1A/ACF1; the interaction is direct and is required to slide nucleosomes from end to center positions on a DNA template in an ATP-dependent manner. Component of the CHRAC ISWI chromatin-remodeling complex at least composed of SMARCA5/SNF2H, BAZ1A/ACF1, CHRAC1 and POLE3; the complex preferentially binds DNA through the CHRAC1-POLE3 heterodimer and possesses ATP-dependent nucleosome-remodeling activity. Within the complex interacts with BAZ1A/ACF1; the interaction is direct and promotes the interaction with the POLE3-CHRAC1 heterodimer. Within the complex interacts with the POLE3-CHRAC1 heterodimer; the interaction is direct and enhances nucleosome sliding activity by the SMARCA5/SNF2H and BAZ1A/ACF1 interaction. Neither POLE3 nor CHRAC1 enhances nucleosome sliding activity of the ACF-5 ISWI chromatin remodeling complex. Component of the WICH-5 ISWI chromatin-remodeling complex (also called the WICH complex) at least composed of SMARCA5/SNF2H and BAZ1B/WSTF, which regulates the spacing of histone octamers on the DNA template to facilitate access to DNA. Within the complex interacts with BAZ1B/WSTF. Component of the NoRC-5 ISWI chromatin-remodeling complex (also called the NoRC chromatin-remodeling complex) at least composed of SMARCA5/SNF2H and BAZ2A/TIP5; the complex suppresses rDNA transcription by a combination of nucleosome remodeling, histone deacetylation, and DNA methylation. Within the complex interacts with BAZ2A/TIP5. Within the complex interacts with HDAC1. Component of the BRF-5 ISWI chromatin-remodeling complex at least composed of SMARCA5/SNF2H and BAZ2B. Within the complex interacts with BAZ2B. Component of the NURF-5 ISWI chromatin-remodeling complex at least composed of SMARCA5/SNF2H and BPTF. Within the complex interacts with BPFT. Component of the CERF-5 ISWI chromatin-remodeling complex at least composed of SMARCA5/SNF2H and CECR2. LUZP1 is detected as part of the CERF-5 complex in embryonic stem cells where it is involved in complex stabilization but is not detected in the complex in the testis. Within the complex interacts with CECR2. Component of the RSF-5 ISWI chromatin-remodeling complex (also called the RSF complex) at least composed of SMARCA5/SNF2H and RSF1. Within the complex interacts with RSF1. Interacts with the cohesin complex component RAD21; the interaction is direct. Interacts with the NuRD complex components HDAC2, RBBP4 and CHD4; the interactions are direct. Interacts with PCNA. Component of the B-WICH complex, at least composed of SMARCA5/SNF2H, BAZ1B/WSTF, SF3B1, DEK, MYO1C, ERCC6, MYBBP1A and DDX21 which positively regulates RNA polymerase III transcription. Interacts with MYO1C. Interacts with BEND3. Interacts with SIRT6; promoting recruitment to DNA damage sites. (Microbial infection) Interacts with JC virus small t antigen. As to quaternary structure, (Microbial infection) Interacts with Epstein Barr virus (EBV) lytic switch protein BZLF1; this interaction participates to the activation of early lytic viral genes by BZLF1. As to expression, ubiquitously expressed.

It is found in the nucleus. It localises to the chromosome. It catalyses the reaction ATP + H2O = ADP + phosphate + H(+). ATPase that possesses intrinsic ATP-dependent nucleosome-remodeling activity. Catalytic subunit of ISWI chromatin-remodeling complexes, which form ordered nucleosome arrays on chromatin and facilitate access to DNA during DNA-templated processes such as DNA replication, transcription, and repair; this may require intact histone H4 tails. Within the ISWI chromatin-remodeling complexes, slides edge- and center-positioned histone octamers away from their original location on the DNA template. Catalytic activity and histone octamer sliding propensity is regulated and determined by components of the ISWI chromatin-remodeling complexes. The BAZ1A/ACF1-, BAZ1B/WSTF-, BAZ2A/TIP5- and BAZ2B-containing ISWI chromatin-remodeling complexes regulate the spacing of nucleosomes along the chromatin and have the ability to slide mononucleosomes to the center of a DNA template in an ATP-dependent manner. The CECR2- and RSF1-containing ISWI chromatin-remodeling complexes do not have the ability to slide mononucleosomes to the center of a DNA template. Binds to core histones together with RSF1, and is required for the assembly of regular nucleosome arrays by the RSF-5 ISWI chromatin-remodeling complex. Involved in DNA replication and together with BAZ1A/ACF1 is required for replication of pericentric heterochromatin in S-phase. Probably plays a role in repression of RNA polymerase I dependent transcription of the rDNA locus, through the recruitment of the SIN3/HDAC1 corepressor complex to the rDNA promoter. Essential component of the WICH-5 ISWI chromatin-remodeling complex (also called the WICH complex), a chromatin-remodeling complex that mobilizes nucleosomes and reconfigures irregular chromatin to a regular nucleosomal array structure. The WICH-5 ISWI chromatin-remodeling complex regulates the transcription of various genes, has a role in RNA polymerase I transcription. Within the B-WICH complex has a role in RNA polymerase III transcription. Mediates the histone H2AX phosphorylation at 'Tyr-142', and is involved in the maintenance of chromatin structures during DNA replication processes. Essential component of NoRC-5 ISWI chromatin-remodeling complex, a complex that mediates silencing of a fraction of rDNA by recruiting histone-modifying enzymes and DNA methyltransferases, leading to heterochromatin formation and transcriptional silencing. In Homo sapiens (Human), this protein is SWI/SNF-related matrix-associated actin-dependent regulator of chromatin subfamily A member 5.